A 1682-amino-acid polypeptide reads, in one-letter code: Calmodulin-binding transcription activator 1 (1682 aa).

A DNA-binding region (CG-1) is located at residues 63–188 (KCSSLPKERH…YLNVPAIEDC (126 aa)). The Nuclear localization signal signature appears at 112–119 (RKKVKYRK). 2 disordered regions span residues 284–375 (RIIS…MVDS) and 599–622 (SSFS…FLQD). A compositionally biased stretch (basic and acidic residues) spans 302 to 327 (EVQHNDVSEGKHEPSHGRSTSREKRN). Polar residues-rich tracts occupy residues 337–367 (HQNS…SGLN) and 599–618 (SSFS…SPSF). The 79-residue stretch at 877–955 (DYSPEWSYPE…ISNSVVFEYK (79 aa)) folds into the IPT/TIG domain. Residues 992–1020 (MAEMTGSQQHKQASGGGGSGSGSGSGAGG) form a disordered region. The segment covering 1005–1020 (SGGGGSGSGSGSGAGG) has biased composition (gly residues). 3 ANK repeats span residues 1066-1095 (RGMT…KHAD), 1111-1141 (FSCT…AISI), and 1145-1174 (LGRL…DEQA). Disordered stretches follow at residues 1217–1249 (ASTN…KKHK) and 1267–1318 (LSLE…SASQ). Over residues 1268-1291 (SLEQPNIRKQSPRSKQPSPETISP) the composition is skewed to polar residues. A compositionally biased stretch (low complexity) spans 1308–1318 (ETAASQASASQ). 3 consecutive IQ domains span residues 1549 to 1585 (QEVA…AAIL), 1586 to 1608 (IQSK…AAVL), and 1609 to 1631 (IQNF…TAVI).

It belongs to the CAMTA family. As to quaternary structure, may interact with calmodulin.

The protein resides in the nucleus. The protein localises to the cytoplasm. In terms of biological role, transcriptional activator. This Mus musculus (Mouse) protein is Calmodulin-binding transcription activator 1.